We begin with the raw amino-acid sequence, 319 residues long: Glutathione synthetase (319 aa).

The region spanning 127–311 is the ATP-grasp domain; that stretch reads KIFVTEFADL…VASLLWDAIE (185 aa). 153–209 contacts ATP; the sequence is RNEMGDIILKPLYGNGGAGVFHSARDDRNFSSLLEMFGQMFREPYIAQEYLPDVRKG. Positions 282 and 284 each coordinate Mg(2+).

It belongs to the prokaryotic GSH synthase family. Requires Mg(2+) as cofactor. Mn(2+) is required as a cofactor.

The catalysed reaction is gamma-L-glutamyl-L-cysteine + glycine + ATP = glutathione + ADP + phosphate + H(+). Its pathway is sulfur metabolism; glutathione biosynthesis; glutathione from L-cysteine and L-glutamate: step 2/2. The protein is Glutathione synthetase of Agrobacterium fabrum (strain C58 / ATCC 33970) (Agrobacterium tumefaciens (strain C58)).